Here is a 465-residue protein sequence, read N- to C-terminus: 3-isopropylmalate dehydratase large subunit (465 aa).

[4Fe-4S] cluster-binding residues include C347, C407, and C410. The interval D416 to H443 is disordered.

It belongs to the aconitase/IPM isomerase family. LeuC type 1 subfamily. In terms of assembly, heterodimer of LeuC and LeuD. The cofactor is [4Fe-4S] cluster.

The catalysed reaction is (2R,3S)-3-isopropylmalate = (2S)-2-isopropylmalate. It functions in the pathway amino-acid biosynthesis; L-leucine biosynthesis; L-leucine from 3-methyl-2-oxobutanoate: step 2/4. In terms of biological role, catalyzes the isomerization between 2-isopropylmalate and 3-isopropylmalate, via the formation of 2-isopropylmaleate. The protein is 3-isopropylmalate dehydratase large subunit of Frankia alni (strain DSM 45986 / CECT 9034 / ACN14a).